We begin with the raw amino-acid sequence, 384 residues long: 8-amino-7-oxononanoate synthase (384 aa).

Arg21 serves as a coordination point for substrate. A pyridoxal 5'-phosphate-binding site is contributed by 108-109 (GF). Residue His133 coordinates substrate. Pyridoxal 5'-phosphate is bound by residues Ser179, His207, and Thr233. Lys236 carries the post-translational modification N6-(pyridoxal phosphate)lysine. A substrate-binding site is contributed by Thr352.

The protein belongs to the class-II pyridoxal-phosphate-dependent aminotransferase family. BioF subfamily. As to quaternary structure, homodimer. The cofactor is pyridoxal 5'-phosphate.

The enzyme catalyses 6-carboxyhexanoyl-[ACP] + L-alanine + H(+) = (8S)-8-amino-7-oxononanoate + holo-[ACP] + CO2. Its pathway is cofactor biosynthesis; biotin biosynthesis. Catalyzes the decarboxylative condensation of pimeloyl-[acyl-carrier protein] and L-alanine to produce 8-amino-7-oxononanoate (AON), [acyl-carrier protein], and carbon dioxide. The protein is 8-amino-7-oxononanoate synthase of Escherichia coli O157:H7.